The sequence spans 305 residues: Deoxyhypusine hydroxylase (305 aa).

2 HEAT-like PBS-type repeats span residues 54–80 and 87–113; these read LKHELAYCLGQMQDESAIPTLEAVLKD and VRHEAGEALGAIGNPKVLELLKKYAED. Fe cation is bound by residues histidine 56, histidine 89, and glutamate 90. Positions 137 to 160 are disordered; it reads EQTKDGTDENPYCSVDPAPPAQRK. 3 HEAT-like PBS-type repeats span residues 178-204, 209-235, and 242-268; these read DRYRAMFALRNLGTEEAVLALGDGLQC, FRHEIGYVLGQIQHEASIPQLQAALEK, and VRHECAEALGSIGKEPCVQILERYRKD. Residues histidine 211, histidine 244, and glutamate 245 each contribute to the Fe cation site.

It belongs to the deoxyhypusine hydroxylase family. It depends on Fe(2+) as a cofactor.

The enzyme catalyses [eIF5A protein]-deoxyhypusine + AH2 + O2 = [eIF5A protein]-hypusine + A + H2O. It functions in the pathway protein modification; eIF5A hypusination. Functionally, catalyzes the hydroxylation of the N(6)-(4-aminobutyl)-L-lysine intermediate produced by deoxyhypusine synthase/DHPS on a critical lysine of the eukaryotic translation initiation factor 5A/eIF-5A. This is the second step of the post-translational modification of that lysine into an unusual amino acid residue named hypusine. Hypusination is unique to mature eIF-5A factor and is essential for its function. This Danio rerio (Zebrafish) protein is Deoxyhypusine hydroxylase (dohh).